Consider the following 786-residue polypeptide: E3 ubiquitin-protein ligase pub3 (786 aa).

A C2 domain is found at 1-109 (MEQGAKRVRF…RSNREVSLTR (109 aa)). 2 disordered regions span residues 134–225 (IRAP…NSNA) and 263–306 (TWTR…DSGN). Residues 142–193 (SSTTANRTTSTPTTTTARTTRTTPRPTATTNTSNQSTSNSTRNGTSAATSNG) are compositionally biased toward low complexity. The segment covering 204–213 (HRSSPVTNRQ) has biased composition (polar residues). Low complexity predominate over residues 214-225 (TNNTSALSNSNA). In terms of domain architecture, WW 1 spans 236–269 (GRLPPGWERRADSLGRTYYVDHNTRTTTWTRPAS). Composition is skewed to polar residues over residues 263–285 (TWTR…QRLN) and 295–305 (SNPSLMQSDSG). 2 consecutive WW domains span residues 306–339 (NDLP…DPRN) and 364–397 (GPLP…DPRL). Positions 453 to 786 (SAHDLKKRLM…VENTVGFGNE (334 aa)) constitute an HECT domain. Cys-754 serves as the catalytic Glycyl thioester intermediate.

The catalysed reaction is S-ubiquitinyl-[E2 ubiquitin-conjugating enzyme]-L-cysteine + [acceptor protein]-L-lysine = [E2 ubiquitin-conjugating enzyme]-L-cysteine + N(6)-ubiquitinyl-[acceptor protein]-L-lysine.. The protein operates within protein modification; protein ubiquitination. Its function is as follows. E3 ubiquitin-protein ligase which accepts ubiquitin from an E2 ubiquitin-conjugating enzyme in the form of a thioester and then directly transfers the ubiquitin to targeted substrates. The sequence is that of E3 ubiquitin-protein ligase pub3 (pub3) from Schizosaccharomyces pombe (strain 972 / ATCC 24843) (Fission yeast).